The following is a 904-amino-acid chain: Translation initiation factor IF-2 (904 aa).

Disordered regions lie at residues 102–122 (TYVK…PDEE), 134–252 (RQRN…MVAG), and 267–316 (HLSA…ERPT). Basic and acidic residues predominate over residues 134–177 (RQRNLEEQQRLAESDRVRDEAIQRKREEEQAAKDRAEAERKAAE). The span at 178–230 (EAAAAASAPAPVADAPKPSAAAPAARLPSSPSSAPRAARPAGASPASRPAAPA) shows a compositional bias: low complexity. A tr-type G domain is found at 403–572 (SRPPVVTIMG…SLQAEVLELK (170 aa)). Residues 412–419 (GHVDHGKT) form a G1 region. 412–419 (GHVDHGKT) contacts GTP. Residues 437–441 (GITQH) form a G2 region. The G3 stretch occupies residues 458-461 (DTPG). GTP is bound by residues 458 to 462 (DTPGH) and 512 to 515 (NKID). Residues 512–515 (NKID) are G4. The segment at 548–550 (SAK) is G5.

It belongs to the TRAFAC class translation factor GTPase superfamily. Classic translation factor GTPase family. IF-2 subfamily.

It localises to the cytoplasm. In terms of biological role, one of the essential components for the initiation of protein synthesis. Protects formylmethionyl-tRNA from spontaneous hydrolysis and promotes its binding to the 30S ribosomal subunits. Also involved in the hydrolysis of GTP during the formation of the 70S ribosomal complex. The protein is Translation initiation factor IF-2 of Xanthomonas axonopodis pv. citri (strain 306).